The primary structure comprises 160 residues: Eosinophil cationic protein (160 aa).

Positions methionine 1–alanine 27 are cleaved as a signal peptide. The required for nearly all of the bactericidal activities; partially involved in LPS-binding stretch occupies residues lysine 28–arginine 72. Histidine 42 serves as the catalytic Proton acceptor. 4 disulfides stabilise this stretch: cysteine 50/cysteine 110, cysteine 64/cysteine 123, cysteine 82/cysteine 138, and cysteine 89/cysteine 98. Position 60 is a 3'-nitrotyrosine (tyrosine 60). Lysine 65–threonine 69 contributes to the substrate binding site. 4 N-linked (GlcNAc...) asparagine glycosylation sites follow: asparagine 86, asparagine 92, asparagine 111, and asparagine 119. The Proton donor role is filled by histidine 155.

Belongs to the pancreatic ribonuclease family. As to quaternary structure, interacts with bacterial lipopolysaccharide (LPS) and lipoteichoic acid (LTA). In vitro interacts with phospholipid bilayers.

The protein resides in the secreted. Cytotoxin and helminthotoxin with low-efficiency ribonuclease activity. Possesses a wide variety of biological activities. Exhibits antibacterial activity. In Pongo pygmaeus (Bornean orangutan), this protein is Eosinophil cationic protein (RNASE3).